We begin with the raw amino-acid sequence, 178 residues long: Ribosome maturation factor RimM (178 aa).

Positions 100 to 178 (DEGEFYWHQL…EIRVDWDADF (79 aa)) constitute a PRC barrel domain.

It belongs to the RimM family. Binds ribosomal protein uS19.

The protein resides in the cytoplasm. An accessory protein needed during the final step in the assembly of 30S ribosomal subunit, possibly for assembly of the head region. Essential for efficient processing of 16S rRNA. May be needed both before and after RbfA during the maturation of 16S rRNA. It has affinity for free ribosomal 30S subunits but not for 70S ribosomes. The chain is Ribosome maturation factor RimM from Azotobacter vinelandii (strain DJ / ATCC BAA-1303).